We begin with the raw amino-acid sequence, 84 residues long: ATPase-stabilizing factor 15 kDa protein (84 aa).

Residues 1–18 (MTRTNKWTEREGKADPKY) are compositionally biased toward basic and acidic residues. The segment at 1-84 (MTRTNKWTER…EQKFENVQKE (84 aa)) is disordered. Phosphoserine is present on residues Ser-28 and Ser-69. Residues 74–84 (HEQKFENVQKE) are compositionally biased toward basic and acidic residues.

Belongs to the STF2 family.

Its subcellular location is the mitochondrion. The protein resides in the cytoplasm. Found to stabilize, together with STF1, a complex of intrinsic ATPase inhibitor INH1 and proton-translocating ATPase (F(1)F(0)-ATPase) in mitochondrial membranes. Binds to the F0 part and may function to hold the ATPase inhibitor or STF1 on the F1 subunit. Also acts as a hydrophilins that enhances dry stress tolerance. Cell viability after desiccation and rehydration is due to the antioxidant capacity of the protein, which reduces the number of apoptotic cells during stress conditions by minimising the accumulation of reactive oxygen species (ROS) in the cells. This chain is ATPase-stabilizing factor 15 kDa protein (STF2), found in Saccharomyces cerevisiae (strain ATCC 204508 / S288c) (Baker's yeast).